The primary structure comprises 82 residues: ATP synthase subunit c, chloroplastic (82 aa).

The next 2 helical transmembrane spans lie at 4 to 24 and 57 to 77; these read IISAASVIAAGLAVGLAAIGP and LAFMESLTIYGLVVALSLLFA.

The protein belongs to the ATPase C chain family. As to quaternary structure, F-type ATPases have 2 components, F(1) - the catalytic core - and F(0) - the membrane proton channel. F(1) has five subunits: alpha(3), beta(3), gamma(1), delta(1), epsilon(1). F(0) has four main subunits: a(1), b(1), b'(1) and c(10-14). The alpha and beta chains form an alternating ring which encloses part of the gamma chain. F(1) is attached to F(0) by a central stalk formed by the gamma and epsilon chains, while a peripheral stalk is formed by the delta, b and b' chains.

It is found in the plastid. The protein localises to the chloroplast thylakoid membrane. In terms of biological role, f(1)F(0) ATP synthase produces ATP from ADP in the presence of a proton or sodium gradient. F-type ATPases consist of two structural domains, F(1) containing the extramembraneous catalytic core and F(0) containing the membrane proton channel, linked together by a central stalk and a peripheral stalk. During catalysis, ATP synthesis in the catalytic domain of F(1) is coupled via a rotary mechanism of the central stalk subunits to proton translocation. Key component of the F(0) channel; it plays a direct role in translocation across the membrane. A homomeric c-ring of between 10-14 subunits forms the central stalk rotor element with the F(1) delta and epsilon subunits. In Antithamnion sp. (Red alga), this protein is ATP synthase subunit c, chloroplastic.